The chain runs to 1046 residues: Probable inorganic carbon transporter subunit DabA1 (1046 aa).

The Zn(2+) site is built by cysteine 462, aspartate 464, histidine 721, and cysteine 736.

It belongs to the inorganic carbon transporter (TC 9.A.2) DabA family. In terms of assembly, forms a complex with DabB1. Zn(2+) is required as a cofactor.

The protein localises to the cell inner membrane. Part of an energy-coupled inorganic carbon pump. The chain is Probable inorganic carbon transporter subunit DabA1 from Halothiobacillus neapolitanus (strain ATCC 23641 / c2) (Thiobacillus neapolitanus).